The chain runs to 148 residues: Large ribosomal subunit protein uL15 (148 aa).

The tract at residues 14–54 (HRKKRVGCGEGGGHGKTSGRGGKGQTARSGSSIRPGFEGGQ) is disordered. Residues 21–37 (CGEGGGHGKTSGRGGKG) are compositionally biased toward gly residues.

This sequence belongs to the universal ribosomal protein uL15 family. As to quaternary structure, part of the 50S ribosomal subunit.

Its function is as follows. Binds to the 23S rRNA. In Opitutus terrae (strain DSM 11246 / JCM 15787 / PB90-1), this protein is Large ribosomal subunit protein uL15.